Consider the following 193-residue polypeptide: Peptidyl-tRNA hydrolase (193 aa).

Tyr16 is a tRNA binding site. Residue His21 is the Proton acceptor of the active site. Positions 66, 68, and 114 each coordinate tRNA.

It belongs to the PTH family. As to quaternary structure, monomer.

It localises to the cytoplasm. It catalyses the reaction an N-acyl-L-alpha-aminoacyl-tRNA + H2O = an N-acyl-L-amino acid + a tRNA + H(+). Its function is as follows. Hydrolyzes ribosome-free peptidyl-tRNAs (with 1 or more amino acids incorporated), which drop off the ribosome during protein synthesis, or as a result of ribosome stalling. In terms of biological role, catalyzes the release of premature peptidyl moieties from peptidyl-tRNA molecules trapped in stalled 50S ribosomal subunits, and thus maintains levels of free tRNAs and 50S ribosomes. The sequence is that of Peptidyl-tRNA hydrolase from Pelobacter propionicus (strain DSM 2379 / NBRC 103807 / OttBd1).